A 173-amino-acid chain; its full sequence is Crossover junction endodeoxyribonuclease RuvC (173 aa).

Catalysis depends on residues Asp8, Glu67, and Asp139. 3 residues coordinate Mg(2+): Asp8, Glu67, and Asp139.

Belongs to the RuvC family. As to quaternary structure, homodimer which binds Holliday junction (HJ) DNA. The HJ becomes 2-fold symmetrical on binding to RuvC with unstacked arms; it has a different conformation from HJ DNA in complex with RuvA. In the full resolvosome a probable DNA-RuvA(4)-RuvB(12)-RuvC(2) complex forms which resolves the HJ. Mg(2+) is required as a cofactor.

It localises to the cytoplasm. It catalyses the reaction Endonucleolytic cleavage at a junction such as a reciprocal single-stranded crossover between two homologous DNA duplexes (Holliday junction).. The RuvA-RuvB-RuvC complex processes Holliday junction (HJ) DNA during genetic recombination and DNA repair. Endonuclease that resolves HJ intermediates. Cleaves cruciform DNA by making single-stranded nicks across the HJ at symmetrical positions within the homologous arms, yielding a 5'-phosphate and a 3'-hydroxyl group; requires a central core of homology in the junction. The consensus cleavage sequence is 5'-(A/T)TT(C/G)-3'. Cleavage occurs on the 3'-side of the TT dinucleotide at the point of strand exchange. HJ branch migration catalyzed by RuvA-RuvB allows RuvC to scan DNA until it finds its consensus sequence, where it cleaves and resolves the cruciform DNA. The sequence is that of Crossover junction endodeoxyribonuclease RuvC from Salmonella arizonae (strain ATCC BAA-731 / CDC346-86 / RSK2980).